Consider the following 261-residue polypeptide: Probable electron transfer flavoprotein subunit beta (261 aa).

The residue at position 2 (Ser2) is an N-acetylserine.

Belongs to the ETF beta-subunit/FixA family. In terms of assembly, heterodimer of an alpha and a beta subunit. Interacts with YFH1. FAD is required as a cofactor. It depends on AMP as a cofactor.

The protein localises to the mitochondrion matrix. Its function is as follows. The electron transfer flavoprotein serves as a specific electron acceptor for several dehydrogenases, including five acyl-CoA dehydrogenases, glutaryl-CoA and sarcosine dehydrogenase. It transfers the electrons to the main mitochondrial respiratory chain via ETF-ubiquinone oxidoreductase (ETF dehydrogenase). The chain is Probable electron transfer flavoprotein subunit beta (CIR1) from Saccharomyces cerevisiae (strain ATCC 204508 / S288c) (Baker's yeast).